The sequence spans 417 residues: NADH-quinone oxidoreductase subunit D (417 aa).

It belongs to the complex I 49 kDa subunit family. In terms of assembly, NDH-1 is composed of 14 different subunits. Subunits NuoB, C, D, E, F, and G constitute the peripheral sector of the complex.

It localises to the cell inner membrane. The catalysed reaction is a quinone + NADH + 5 H(+)(in) = a quinol + NAD(+) + 4 H(+)(out). Its function is as follows. NDH-1 shuttles electrons from NADH, via FMN and iron-sulfur (Fe-S) centers, to quinones in the respiratory chain. The immediate electron acceptor for the enzyme in this species is believed to be ubiquinone. Couples the redox reaction to proton translocation (for every two electrons transferred, four hydrogen ions are translocated across the cytoplasmic membrane), and thus conserves the redox energy in a proton gradient. In Nitrosomonas eutropha (strain DSM 101675 / C91 / Nm57), this protein is NADH-quinone oxidoreductase subunit D.